Here is a 184-residue protein sequence, read N- to C-terminus: NADH-quinone oxidoreductase subunit B (184 aa).

[4Fe-4S] cluster contacts are provided by Cys37, Cys38, Cys103, and Cys132.

The protein belongs to the complex I 20 kDa subunit family. As to quaternary structure, NDH-1 is composed of 14 different subunits. Subunits NuoB, C, D, E, F, and G constitute the peripheral sector of the complex. [4Fe-4S] cluster serves as cofactor.

The protein resides in the cell membrane. It carries out the reaction a quinone + NADH + 5 H(+)(in) = a quinol + NAD(+) + 4 H(+)(out). Functionally, NDH-1 shuttles electrons from NADH, via FMN and iron-sulfur (Fe-S) centers, to quinones in the respiratory chain. The immediate electron acceptor for the enzyme in this species is believed to be a menaquinone. Couples the redox reaction to proton translocation (for every two electrons transferred, four hydrogen ions are translocated across the cytoplasmic membrane), and thus conserves the redox energy in a proton gradient. The polypeptide is NADH-quinone oxidoreductase subunit B (Mycolicibacterium paratuberculosis (strain ATCC BAA-968 / K-10) (Mycobacterium paratuberculosis)).